A 413-amino-acid chain; its full sequence is Interferon-inducible GTPase 1 (413 aa).

The N-myristoyl glycine moiety is linked to residue glycine 2. Positions 68–250 (SVLNVAVTGE…PVLMDKLISD (183 aa)) constitute an IRG-type G domain. Residues glycine 79, glycine 81, lysine 82, serine 83, serine 84, threonine 102, and glycine 103 each contribute to the GDP site. Threonine 102 carries the post-translational modification (Microbial infection) Phosphothreonine; by ROP18. Threonine 108 bears the (Microbial infection) Phosphothreonine; by ROP18 mark. Positions 184, 186, 187, and 232 each coordinate GDP. A disulfide bridge connects residues cysteine 236 and cysteine 410.

It belongs to the TRAFAC class dynamin-like GTPase superfamily. IRG family. Monomer, as apoenzyme and in the GDP-bound form. Homooligomer, upon GTP binding. Interacts with HOOK3. In terms of assembly, (Microbial infection) Interacts with Toxoplasma gondii GRA7 in GTP-dependent manner; the interaction results in faster turnover of the GTP-activated IIGP1 oligomer. Interacts with T.gondii ROP5; the interaction results in inhibition of IRGA6/IIGP1 GTPase activity and oligomerization. In terms of processing, myristoylated. Post-translationally, (Microbial infection) Phosphorylated by Toxoplasma gondii ROP18 from virulent strains.

The protein resides in the cytoplasm. It is found in the nucleus membrane. The protein localises to the endoplasmic reticulum membrane. It localises to the golgi apparatus. Its subcellular location is the golgi stack membrane. The protein resides in the parasitophorous vacuole membrane. It catalyses the reaction GTP + H2O = GDP + phosphate + H(+). In terms of biological role, GTPase with low activity. Has higher affinity for GDP than for GTP. Plays a role in resistance to intracellular pathogens. During infection with avirulent Toxoplasma gondii strains, recruited to the parasitophorous vacuole membrane. Required for disruption of the parasitophorous vacuole formed following T.gondii infection and subsequent killing of the parasite. Mediates resistance to Chlamydia trachomatis infection by targeting bacterial inclusions to autophagosomes for subsequent lysosomal destruction. In Mus musculus (Mouse), this protein is Interferon-inducible GTPase 1 (Iigp1).